The sequence spans 304 residues: C-type lectin domain-containing protein 141 (304 aa).

Positions 1-19 (MRSSSTLLIAFGLFLASMS) are cleaved as a signal peptide. Residues 29-100 (GSGGHRPPSS…TTPEPTTTKV (72 aa)) form a disordered region. Residues 51–99 (TKPPKSTSTPSTSTSTPTTTTTTTTTTTTTPTTTTTTTTTTTPEPTTTK) are compositionally biased toward low complexity.

The chain is C-type lectin domain-containing protein 141 (clec-141) from Caenorhabditis elegans.